The sequence spans 1027 residues: MKLFALFIQRPVATTLLSLAISLCGALGFMLLPVAPLPQVDYPVINIYASLPGASPETMASSVATPLERSLGRIAGIDEMTSSSALGSTSITLVFDLNKDINTAARDVQAALNASQSLLPSGMPSRPRYYKSNPSDAPIMILTLTSETQNTGELYDLASTRLAQKISQIEGVSEVSVGGGSLPAVRVALNPDALFNQNVSLDDVRKAISQSNVRRPQGFIHNDENRWQIQTNDELSKAQDYRPIIVHYNQDAIVRLSDVAQVTDSVQNARAAGMSGGEPAILLVIRREAGANIIETVNRIRDELPELRELLPASVNLKVAQDRTPTIRASLAEVERALAIAVALVILVVFLFLRSGRATLIPAVAVPVSLIGTFSAMYLCGFSLNNLSLMALTVATGFVVDDAIVVLENISRHIENGLKPKQAALKGVSEVGFTVLSMSISLVAVFIPLLLMDGLVGRLFKEFAITLTTAIGISLFVSLTLTPMMCAHLLKGIKPKAQSHLRGFGKLIFRLQQGYSVTLQAALRHKRWIMAIFITTLGLNAYLYISAPKTFFPDQDTGRLMGFVRADQSISFQSMKEKMTRFMQEINADKDVDSVTGFTGGGRINSGFMFISLNPLSERTDSANQVINRLRIKLANEPGATLFLMPVQDVRAGGRQANASYQFTLLADDLSELRKWEPLIRKALGELPELVDVNSDKEDKGAEMALTYDRDTMSQLGINVSDANNLLNNAFGQRQISTIYAPLNQYKVVMEVSEQYTQDVSALDKMYVMNTQGERIPLSAFASWYPANAPLSVNHQGLSAASTIAFNVPEGYTLSDAINAIERTMTELGVPNTVRGTFAGTAQIFQETIKSQLILILAAIVTVYIVLGVLYESYIHPLTILSTLPSAGVGALLALRLFDTPFSLIALIGIMLLIGIVKKNAIIMVDFAITAQREGKLSAQEAIIQASLLRFRPIIMTTLAALFGALPLMLSSGDGAELRQPLGITIVGGLLMSQLLTLYTTPIIYLFFDGVRQRWQQRRHNKKEANA.

Transmembrane regions (helical) follow at residues 16 to 36, 333 to 353, 360 to 380, 387 to 407, 431 to 451, 463 to 483, 528 to 548, 853 to 873, 875 to 895, 897 to 917, 953 to 973, and 984 to 1004; these read LLSLAISLCGALGFMLLPVAP, EVERALAIAVALVILVVFLFL, LIPAVAVPVSLIGTFSAMYLC, LSLMALTVATGFVVDDAIVVL, VGFTVLSMSISLVAVFIPLLL, FAITLTTAIGISLFVSLTLTP, WIMAIFITTLGLNAYLYISAP, LILILAAIVTVYIVLGVLYES, IHPLTILSTLPSAGVGALLAL, LFDTPFSLIALIGIMLLIGIV, PIIMTTLAALFGALPLMLSSG, and ITIVGGLLMSQLLTLYTTPII.

It belongs to the resistance-nodulation-cell division (RND) (TC 2.A.6) family. MdtC subfamily. In terms of assembly, part of a tripartite efflux system composed of MdtA, MdtB and MdtC. MdtC forms a heteromultimer with MdtB.

The protein resides in the cell inner membrane. In Proteus mirabilis (strain HI4320), this protein is Multidrug resistance protein MdtC.